Reading from the N-terminus, the 106-residue chain is ATP-dependent Clp protease adapter protein ClpS (106 aa).

Polar residues predominate over residues 1-13 (MGNNSTWSQSENL). The tract at residues 1–21 (MGNNSTWSQSENLTADKQKEK) is disordered.

This sequence belongs to the ClpS family. As to quaternary structure, binds to the N-terminal domain of the chaperone ClpA.

In terms of biological role, involved in the modulation of the specificity of the ClpAP-mediated ATP-dependent protein degradation. This is ATP-dependent Clp protease adapter protein ClpS from Pectobacterium carotovorum subsp. carotovorum (strain PC1).